The following is a 611-amino-acid chain: Probable inactive purple acid phosphatase 27 (611 aa).

The first 18 residues, 1 to 18 (MARNFLLVLLWFIVQVSS), serve as a signal peptide directing secretion. N-linked (GlcNAc...) asparagine glycans are attached at residues Asn-263 and Asn-271. Asp-293 contributes to the Fe cation binding site. A glycan (N-linked (GlcNAc...) asparagine) is linked at Asn-314. Asp-334 and Tyr-337 together coordinate Fe cation. Asp-334 provides a ligand contact to Zn(2+). 3 residues coordinate Zn(2+): Asn-367, His-456, and His-498. Asn-367 is a binding site for substrate. A substrate-binding site is contributed by 498–500 (HVH). Fe cation is bound at residue His-500.

Belongs to the metallophosphoesterase superfamily. Purple acid phosphatase family. As to quaternary structure, homodimer. The cofactor is Fe cation. Requires Zn(2+) as cofactor. Expressed in roots, stems, leaves, flowers and siliques.

Its subcellular location is the secreted. In Arabidopsis thaliana (Mouse-ear cress), this protein is Probable inactive purple acid phosphatase 27 (PAP27).